A 428-amino-acid polypeptide reads, in one-letter code: CinA-like protein (428 aa).

It belongs to the CinA family.

This Gemmatimonas aurantiaca (strain DSM 14586 / JCM 11422 / NBRC 100505 / T-27) protein is CinA-like protein.